Here is a 673-residue protein sequence, read N- to C-terminus: Polyadenylate-binding protein, cytoplasmic and nuclear (673 aa).

Residues 1–39 (MSAETATSPAPAAETPVAPAPATQTTPAEGAPTPAAAAP) form a disordered region. 4 consecutive RRM domains span residues 46–124 (ASLY…WSQR), 134–211 (GNIF…HHVG), 227–304 (TNVY…RAQT), and 330–407 (VNLY…LAQR). Residues 300–322 (GRAQTKSEREAELKKSHEEKRLE) are disordered. The span at 304 to 322 (TKSEREAELKKSHEEKRLE) shows a compositional bias: basic and acidic residues. Disordered regions lie at residues 509 to 572 (APGY…AGRL) and 644 to 673 (WGKD…EKKE). One can recognise a PABC domain in the interval 569-646 (AGRLDAQSLA…ALRVLAEWGK (78 aa)).

The protein belongs to the polyadenylate-binding protein type-1 family.

It is found in the cytoplasm. The protein resides in the nucleus. Functionally, binds the poly(A) tail of mRNA. Appears to be an important mediator of the multiple roles of the poly(A) tail in mRNA biogenesis, stability and translation. In the nucleus, involved in both mRNA cleavage and polyadenylation. Is also required for efficient mRNA export to the cytoplasm. Acts in concert with a poly(A)-specific nuclease (PAN) to affect poly(A) tail shortening, which may occur concomitantly with either nucleocytoplasmic mRNA transport or translational initiation. In the cytoplasm, stimulates translation initiation and regulates mRNA decay through translation termination-coupled poly(A) shortening, probably mediated by PAN. This chain is Polyadenylate-binding protein, cytoplasmic and nuclear (PAB1), found in Cryptococcus neoformans var. neoformans serotype D (strain B-3501A) (Filobasidiella neoformans).